A 203-amino-acid polypeptide reads, in one-letter code: Large ribosomal subunit protein bL25 (203 aa).

This sequence belongs to the bacterial ribosomal protein bL25 family. CTC subfamily. Part of the 50S ribosomal subunit; part of the 5S rRNA/L5/L18/L25 subcomplex. Contacts the 5S rRNA. Binds to the 5S rRNA independently of L5 and L18.

Its function is as follows. This is one of the proteins that binds to the 5S RNA in the ribosome where it forms part of the central protuberance. This Pseudomonas savastanoi pv. phaseolicola (strain 1448A / Race 6) (Pseudomonas syringae pv. phaseolicola (strain 1448A / Race 6)) protein is Large ribosomal subunit protein bL25.